A 353-amino-acid chain; its full sequence is Photosystem II protein D1 (353 aa).

An N-acetylthreonine modification is found at threonine 2. Threonine 2 carries the phosphothreonine modification. Helical transmembrane passes span 29–46 (YIGWFGVLMIPTLLTATS), 118–133 (HFLLGVACYMGREWEL), and 142–156 (WIAVAYSAPVAAATA). Chlorophyll a is bound at residue histidine 118. Tyrosine 126 lines the pheophytin a pocket. Aspartate 170 and glutamate 189 together coordinate [CaMn4O5] cluster. The chain crosses the membrane as a helical span at residues 197 to 218 (FHMLGVAGVFGGSLFSAMHGSL). Residue histidine 198 participates in chlorophyll a binding. Residues histidine 215 and 264 to 265 (SF) each bind a quinone. Histidine 215 is a binding site for Fe cation. Residue histidine 272 participates in Fe cation binding. The helical transmembrane segment at 274–288 (LLAAWPVVGIWFTAL) threads the bilayer. Positions 332, 333, 342, and 344 each coordinate [CaMn4O5] cluster. Residues 345–353 (AVEAPSTNG) constitute a propeptide that is removed on maturation.

The protein belongs to the reaction center PufL/M/PsbA/D family. As to quaternary structure, PSII is composed of 1 copy each of membrane proteins PsbA, PsbB, PsbC, PsbD, PsbE, PsbF, PsbH, PsbI, PsbJ, PsbK, PsbL, PsbM, PsbT, PsbX, PsbY, PsbZ, Psb30/Ycf12, at least 3 peripheral proteins of the oxygen-evolving complex and a large number of cofactors. It forms dimeric complexes. The cofactor is The D1/D2 heterodimer binds P680, chlorophylls that are the primary electron donor of PSII, and subsequent electron acceptors. It shares a non-heme iron and each subunit binds pheophytin, quinone, additional chlorophylls, carotenoids and lipids. D1 provides most of the ligands for the Mn4-Ca-O5 cluster of the oxygen-evolving complex (OEC). There is also a Cl(-1) ion associated with D1 and D2, which is required for oxygen evolution. The PSII complex binds additional chlorophylls, carotenoids and specific lipids.. Tyr-161 forms a radical intermediate that is referred to as redox-active TyrZ, YZ or Y-Z. Post-translationally, C-terminally processed by CTPA; processing is essential to allow assembly of the oxygen-evolving complex and thus photosynthetic growth.

The protein resides in the plastid. The protein localises to the chloroplast thylakoid membrane. It carries out the reaction 2 a plastoquinone + 4 hnu + 2 H2O = 2 a plastoquinol + O2. Its function is as follows. Photosystem II (PSII) is a light-driven water:plastoquinone oxidoreductase that uses light energy to abstract electrons from H(2)O, generating O(2) and a proton gradient subsequently used for ATP formation. It consists of a core antenna complex that captures photons, and an electron transfer chain that converts photonic excitation into a charge separation. The D1/D2 (PsbA/PsbD) reaction center heterodimer binds P680, the primary electron donor of PSII as well as several subsequent electron acceptors. The chain is Photosystem II protein D1 from Dioscorea elephantipes (Elephant's foot yam).